The sequence spans 361 residues: MSGNTFGKLFTVTTFGESHGEALGAIVDGCPPGVALEASDLQHDLDRRRPGTSRHTTQRREPDQVRILSGVFEGVTTGTPIGLLIENTDQRSKDYSKIKDQFRPAHADYTYHHKYGIRDYRGGGRSSARETAMRVAAGAIARKFLASQGIRVRGYMSQLGPIDIAFKQWEAVDTNPFFCPDPDKLPELEAFMDQLRRDQDSVGARITVVADGVPVGLGEPVFDRLDADLAHALMSINAVKGVEIGDGFASVAQRGSEHRDEMTPQGFLSNHAGGVLGGISSGQPLIAHLALKPTSSITQPGRSIDVHGEAVEVVTKGRHDPCVGIRATPIAEAMMALTLMDHYLRHRAQNADVEVSTPRLG.

Positions 40 to 49 (DLQHDLDRRR) are enriched in basic and acidic residues. The tract at residues 40-60 (DLQHDLDRRRPGTSRHTTQRR) is disordered. Residues Arg-48 and Arg-54 each contribute to the NADP(+) site. Residues 125–127 (RSS), 237–238 (NA), Gly-277, 292–296 (KPTSS), and Arg-318 each bind FMN.

The protein belongs to the chorismate synthase family. Homotetramer. FMNH2 is required as a cofactor.

The catalysed reaction is 5-O-(1-carboxyvinyl)-3-phosphoshikimate = chorismate + phosphate. It participates in metabolic intermediate biosynthesis; chorismate biosynthesis; chorismate from D-erythrose 4-phosphate and phosphoenolpyruvate: step 7/7. In terms of biological role, catalyzes the anti-1,4-elimination of the C-3 phosphate and the C-6 proR hydrogen from 5-enolpyruvylshikimate-3-phosphate (EPSP) to yield chorismate, which is the branch point compound that serves as the starting substrate for the three terminal pathways of aromatic amino acid biosynthesis. This reaction introduces a second double bond into the aromatic ring system. The sequence is that of Chorismate synthase from Chromohalobacter salexigens (strain ATCC BAA-138 / DSM 3043 / CIP 106854 / NCIMB 13768 / 1H11).